The primary structure comprises 286 residues: 4-hydroxy-tetrahydrodipicolinate synthase (286 aa).

T42 serves as a coordination point for pyruvate. The Proton donor/acceptor role is filled by Y129. K157 serves as the catalytic Schiff-base intermediate with substrate. I196 provides a ligand contact to pyruvate.

This sequence belongs to the DapA family. Homotetramer; dimer of dimers.

The protein resides in the cytoplasm. The catalysed reaction is L-aspartate 4-semialdehyde + pyruvate = (2S,4S)-4-hydroxy-2,3,4,5-tetrahydrodipicolinate + H2O + H(+). It participates in amino-acid biosynthesis; L-lysine biosynthesis via DAP pathway; (S)-tetrahydrodipicolinate from L-aspartate: step 3/4. Its function is as follows. Catalyzes the condensation of (S)-aspartate-beta-semialdehyde [(S)-ASA] and pyruvate to 4-hydroxy-tetrahydrodipicolinate (HTPA). The protein is 4-hydroxy-tetrahydrodipicolinate synthase of Chlamydia trachomatis serovar A (strain ATCC VR-571B / DSM 19440 / HAR-13).